Here is a 115-residue protein sequence, read N- to C-terminus: Disintegrin EC6 subunit alpha (115 aa).

Residues 1 to 20 (MIQVLLVIICLAVFPYQGSS) form the signal peptide. A propeptide spanning residues 21 to 47 (IILESGNINDYEIVYPKKVAVLPTGAM) is cleaved from the precursor. Residues 48-112 (NSVHPCCDPV…DCPRNRYKGK (65 aa)) enclose the Disintegrin domain. 4 cysteine pairs are disulfide-bonded: C53–C76, C67–C73, C72–C97, and C85–C104. The Cell attachment site; atypical (MLD) signature appears at 89–91 (MLD).

Belongs to the disintegrin family. Dimeric disintegrin subfamily. As to quaternary structure, heterodimer with subunit beta; disulfide-linked. Expressed by the venom gland.

Its subcellular location is the secreted. Functionally, potently inhibits adhesion of alpha-4/beta-1 (ITGA4/ITGB1) and alpha-9/beta-1 (ITGA9/ITGB1) integrins to VCAM1, and adhesion of alpha-5/beta-1 (ITGA5/ITGB1) integrin to fibronectin. Has a much less effect on alpha-IIb/beta-3 (ITGA2B/ITGB3) integrin. Also potently inhibits neutrophil migration across TNF-alpha-activated human umbilical endothelial cells. This is Disintegrin EC6 subunit alpha from Echis carinatus sochureki (Saw-scaled viper).